The sequence spans 155 residues: Ribosome maturation factor RimP (155 aa).

Belongs to the RimP family.

It localises to the cytoplasm. Required for maturation of 30S ribosomal subunits. This Staphylococcus epidermidis (strain ATCC 35984 / DSM 28319 / BCRC 17069 / CCUG 31568 / BM 3577 / RP62A) protein is Ribosome maturation factor RimP.